Consider the following 284-residue polypeptide: Bifunctional protein FolD (284 aa).

Residues 166–168 and Ile232 each bind NADP(+); that span reads GAS.

This sequence belongs to the tetrahydrofolate dehydrogenase/cyclohydrolase family. Homodimer.

It carries out the reaction (6R)-5,10-methylene-5,6,7,8-tetrahydrofolate + NADP(+) = (6R)-5,10-methenyltetrahydrofolate + NADPH. The catalysed reaction is (6R)-5,10-methenyltetrahydrofolate + H2O = (6R)-10-formyltetrahydrofolate + H(+). It participates in one-carbon metabolism; tetrahydrofolate interconversion. In terms of biological role, catalyzes the oxidation of 5,10-methylenetetrahydrofolate to 5,10-methenyltetrahydrofolate and then the hydrolysis of 5,10-methenyltetrahydrofolate to 10-formyltetrahydrofolate. This chain is Bifunctional protein FolD, found in Shewanella frigidimarina (strain NCIMB 400).